The primary structure comprises 173 residues: Protein TraS (173 aa).

It is found in the cell inner membrane. Its function is as follows. Involved in surface exclusion. In Escherichia coli (strain K12), this protein is Protein TraS (traS).